We begin with the raw amino-acid sequence, 424 residues long: Zinc metalloprotease RasP (424 aa).

5 helical membrane-spanning segments follow: residues 5–25, 174–194, 317–337, 351–371, and 396–416; these read VAFI…HLIF, FAGP…LGII, LFML…VGIY, FLLW…VPLP, and EGIF…VVTW. Zn(2+) is bound at residue histidine 18. Glutamate 19 is a catalytic residue. Position 22 (histidine 22) interacts with Zn(2+). Residues 184 to 269 form the PDZ domain; that stretch reads AIAIFLILGI…SQDISVVPGE (86 aa).

The protein belongs to the peptidase M50B family. It depends on Zn(2+) as a cofactor.

It localises to the cell membrane. In terms of biological role, is responsible for Site-2 cleavage of the RsiW anti-sigma factor. This results, after a third proteolytic step catalyzed by the ClpXP protease, in the release of SigW and the transcription activation of the genes under the control of the sigma-W factor. This is Zinc metalloprotease RasP (rasP) from Oceanobacillus iheyensis (strain DSM 14371 / CIP 107618 / JCM 11309 / KCTC 3954 / HTE831).